The chain runs to 177 residues: UBA-like domain-containing protein 1 (177 aa).

Residues 89 to 177 (ESFHSGGSGS…RAHPAMEAER (89 aa)) are disordered. Low complexity predominate over residues 112–138 (PHAATSSSAASSWPTAASPPGGPQHHQ). The span at 139-151 (PQPPLWTPTPPSP) shows a compositional bias: pro residues. Positions 167–177 (PRAHPAMEAER) are enriched in basic and acidic residues.

It belongs to the UBALD family.

This Homo sapiens (Human) protein is UBA-like domain-containing protein 1 (UBALD1).